The following is a 498-amino-acid chain: Meiosis-specific nuclear structural protein 1 (498 aa).

Coiled coils occupy residues 45–211 (KSEE…FLKE), 270–348 (LAFA…QRLE), and 385–450 (DDRI…RQKI).

Belongs to the MNS1 family.

It is found in the nucleus. Its subcellular location is the cytoplasm. It localises to the cytoskeleton. The protein resides in the cilium axoneme. The protein localises to the flagellum axoneme. In terms of biological role, microtubule inner protein (MIP) part of the dynein-decorated doublet microtubules (DMTs) in cilia axoneme, which is required for motile cilia beating. May play a role in the control of meiotic division and germ cell differentiation through regulation of pairing and recombination during meiosis. Required for sperm flagella assembly. May play a role in the assembly and function of the outer dynein arm-docking complex (ODA-DC). ODA-DC mediates outer dynein arms (ODA) binding onto the axonemal doublet microtubules. The chain is Meiosis-specific nuclear structural protein 1 (mns1) from Xenopus tropicalis (Western clawed frog).